We begin with the raw amino-acid sequence, 390 residues long: Cytochrome b (390 aa).

The next 4 helical transmembrane spans lie at 32–52 (MGSLLGLCLVIQILTGIFMAM), 76–98 (WFLRYAHANGASFFFICMYIHMG), 113–133 (LWTIGVIIFILTMATAFLGYC), and 179–199 (FFALHYLFPFVIAAVVIMHMM). Heme b is bound by residues histidine 82 and histidine 96. Heme b is bound by residues histidine 183 and histidine 197. Histidine 202 serves as a coordination point for a ubiquinone. Helical transmembrane passes span 225 to 245 (FVFKDLITVFVFLIVFSLFVF), 289 to 309 (LMGVITMFSAILVLLVLPFTD), 321 to 341 (LSKLFFFLFVFNFVLLGQIGA), and 348 to 368 (YILMGQISTFLYFAYFLVFIP).

It belongs to the cytochrome b family. As to quaternary structure, fungal cytochrome b-c1 complex contains 10 subunits; 3 respiratory subunits, 2 core proteins and 5 low-molecular weight proteins. Cytochrome b-c1 complex is a homodimer. Heme b serves as cofactor.

It is found in the mitochondrion inner membrane. In terms of biological role, component of the ubiquinol-cytochrome c reductase complex (complex III or cytochrome b-c1 complex) that is part of the mitochondrial respiratory chain. The b-c1 complex mediates electron transfer from ubiquinol to cytochrome c. Contributes to the generation of a proton gradient across the mitochondrial membrane that is then used for ATP synthesis. This Naumovozyma castellii (Yeast) protein is Cytochrome b (COB).